Reading from the N-terminus, the 883-residue chain is Integrator complex subunit 6-B (883 aa).

The VWFA domain maps to 3 to 227 (ILLFLLDTSA…QCLESLVQKI (225 aa)). Residues 626–633 (MMIDEADE) carry the Inhibitory loop motif.

This sequence belongs to the Integrator subunit 6 family. Component of the Integrator complex, composed of core subunits INTS1, INTS2, INTS3, INTS4, INTS5, INTS6, INTS7, INTS8, INTS9/RC74, INTS10, INTS11/CPSF3L, INTS12, INTS13, INTS14 and INTS15. The core complex associates with protein phosphatase 2A subunits PPP2CA and PPP2R1A, to form the Integrator-PP2A (INTAC) complex.

It is found in the nucleus. Its subcellular location is the chromosome. In terms of biological role, component of the integrator complex, a multiprotein complex that terminates RNA polymerase II (Pol II) transcription in the promoter-proximal region of genes. The integrator complex provides a quality checkpoint during transcription elongation by driving premature transcription termination of transcripts that are unfavorably configured for transcriptional elongation: the complex terminates transcription by (1) catalyzing dephosphorylation of the C-terminal domain (CTD) of Pol II subunit POLR2A/RPB1 and SUPT5H/SPT5, (2) degrading the exiting nascent RNA transcript via endonuclease activity and (3) promoting the release of Pol II from bound DNA. The integrator complex is also involved in terminating the synthesis of non-coding Pol II transcripts, such as enhancer RNAs (eRNAs), small nuclear RNAs (snRNAs), telomerase RNAs and long non-coding RNAs (lncRNAs). Within the integrator complex, INTS6 acts as a molecular adapter that promotes assembly of protein phosphatase 2A (PP2A) subunits to the integrator core complex, promoting recruitment of PP2A to transcription pause-release checkpoint. In Xenopus laevis (African clawed frog), this protein is Integrator complex subunit 6-B (ints6-b).